Here is a 126-residue protein sequence, read N- to C-terminus: Glycine cleavage system H protein (126 aa).

The Lipoyl-binding domain maps to 22-104 (IAYVGITDYA…YGKGWLIKIK (83 aa)). An N6-lipoyllysine modification is found at K63.

Belongs to the GcvH family. The glycine cleavage system is composed of four proteins: P, T, L and H. It depends on (R)-lipoate as a cofactor.

Functionally, the glycine cleavage system catalyzes the degradation of glycine. The H protein shuttles the methylamine group of glycine from the P protein to the T protein. The protein is Glycine cleavage system H protein of Phocaeicola vulgatus (strain ATCC 8482 / DSM 1447 / JCM 5826 / CCUG 4940 / NBRC 14291 / NCTC 11154) (Bacteroides vulgatus).